A 215-amino-acid polypeptide reads, in one-letter code: Peptide methionine sulfoxide reductase MsrA (215 aa).

C57 is a catalytic residue.

Belongs to the MsrA Met sulfoxide reductase family.

It catalyses the reaction L-methionyl-[protein] + [thioredoxin]-disulfide + H2O = L-methionyl-(S)-S-oxide-[protein] + [thioredoxin]-dithiol. It carries out the reaction [thioredoxin]-disulfide + L-methionine + H2O = L-methionine (S)-S-oxide + [thioredoxin]-dithiol. Functionally, has an important function as a repair enzyme for proteins that have been inactivated by oxidation. Catalyzes the reversible oxidation-reduction of methionine sulfoxide in proteins to methionine. This is Peptide methionine sulfoxide reductase MsrA from Saccharophagus degradans (strain 2-40 / ATCC 43961 / DSM 17024).